Reading from the N-terminus, the 256-residue chain is 6-carboxyhexanoate--CoA ligase (256 aa).

The protein belongs to the BioW family. Homodimer. Mg(2+) serves as cofactor.

The enzyme catalyses heptanedioate + ATP + CoA = 6-carboxyhexanoyl-CoA + AMP + diphosphate. Its pathway is metabolic intermediate metabolism; pimeloyl-CoA biosynthesis; pimeloyl-CoA from pimelate: step 1/1. Functionally, catalyzes the transformation of pimelate into pimeloyl-CoA with concomitant hydrolysis of ATP to AMP. This Methanobrevibacter ruminantium (strain ATCC 35063 / DSM 1093 / JCM 13430 / OCM 146 / M1) (Methanobacterium ruminantium) protein is 6-carboxyhexanoate--CoA ligase.